Reading from the N-terminus, the 177-residue chain is Nucleoside triphosphate/diphosphate phosphatase (177 aa).

Arg-23 functions as the Proton donor in the catalytic mechanism. Positions 87, 103, 105, 107, 120, and 123 each coordinate Mg(2+).

The protein belongs to the Ntdp family. It depends on Mg(2+) as a cofactor.

The catalysed reaction is a ribonucleoside 5'-triphosphate + H2O = a ribonucleoside 5'-diphosphate + phosphate + H(+). It catalyses the reaction a ribonucleoside 5'-diphosphate + H2O = a ribonucleoside 5'-phosphate + phosphate + H(+). In terms of biological role, has nucleoside phosphatase activity towards nucleoside triphosphates and nucleoside diphosphates. The polypeptide is Nucleoside triphosphate/diphosphate phosphatase (Streptococcus thermophilus (strain ATCC BAA-491 / LMD-9)).